Reading from the N-terminus, the 61-residue chain is Cytotoxin homolog 2 (61 aa).

Intrachain disulfides connect cysteine 3–cysteine 22, cysteine 15–cysteine 39, cysteine 43–cysteine 54, and cysteine 55–cysteine 60.

The protein belongs to the three-finger toxin family. Short-chain subfamily. Orphan group XV sub-subfamily. Expressed by the venom gland.

It is found in the secreted. It localises to the target cell membrane. Its function is as follows. Has low cytotoxic activity. The protein is Cytotoxin homolog 2 of Naja melanoleuca (Forest cobra).